The sequence spans 347 residues: N-acetyl-gamma-glutamyl-phosphate reductase (347 aa).

Residue Cys-152 is part of the active site.

The protein belongs to the NAGSA dehydrogenase family. Type 1 subfamily.

It is found in the cytoplasm. The enzyme catalyses N-acetyl-L-glutamate 5-semialdehyde + phosphate + NADP(+) = N-acetyl-L-glutamyl 5-phosphate + NADPH + H(+). It functions in the pathway amino-acid biosynthesis; L-arginine biosynthesis; N(2)-acetyl-L-ornithine from L-glutamate: step 3/4. Functionally, catalyzes the NADPH-dependent reduction of N-acetyl-5-glutamyl phosphate to yield N-acetyl-L-glutamate 5-semialdehyde. The sequence is that of N-acetyl-gamma-glutamyl-phosphate reductase from Ehrlichia ruminantium (strain Gardel).